A 107-amino-acid polypeptide reads, in one-letter code: UPF0473 protein llmg_0152 (107 aa).

The protein belongs to the UPF0473 family.

The polypeptide is UPF0473 protein llmg_0152 (Lactococcus lactis subsp. cremoris (strain MG1363)).